The primary structure comprises 1842 residues: MRPEVEQELAHTLLLELLAYQFASPVRWIETQDVILSPPVSAERIVEIGPSPTLAGMAKRTLKLKYENMDAALSINREVLCYSKDAREIYYNFEDEVADEPAEAPASTSSTPKVETAAAAAPAATPAPAPAQTSAPAAALPDEPPKALEVLHTLVAQKLKKSIEEVSPQKSIKDLVGGKSTLQNEILGDLQKEFGATPEKPEEVPLDELGAIMQSSFNGSLGKQSSSLISRMISSKMPGGFNNSAVRGYLGNRYGLGPGRLESVLLLALTMEPASRLGSEADAKAWLDSVAQKYAARNGVTLSSPTAEGGSSSGSAAVIDEETFKKLTKNNTMLVTQQLELFARYLNKDLRAGQKAQVAEKVISDTLRAQLDLWNEEHGEFYASGIAPIFSPLKARVYDSDWNWARQDALKMFFDIIFGRLKHVDTEIVARCISVMNRSNPTLLEFMQYHIDHCPAEKGETYQLAKTLGQQLIDNCKSVIDAPPVFKNVNHPTAPSTTIDERGNLNYEEIPRPGVRKLTHYVTEMAKGGKLPTESKNKAKVQNDLARIYRIIKSQNKMSRSSKLQIKQLYGQVLHALSLPLPSSNDEQTPVKETIPFLHIRKKSVDGNWEFNKSLTGTYLDVLESGAKNGITYQDKYALVTGAGAGSIGAQIVEGLLAGGAKVVVTTSRFSRKVTEFYQSLYTRHGSRGSCLIVVPFNQGSKTDVEALIDYIYDEKKGLGWNLDYIVPFAAIPENGREIDGIDSRSEFAHRIMLTNILRLLGAVKSQKASRGMDTRPAQVILPLSPNHGTFGNDGLYSESKLGLETLFNRWYSESWANYLTICGAVIGWTRGTGLMAPNNIVSQGIEKYGVRTFSQSEMAFNILGLMSQKVVDLCQSEPIYANLNGGLELLPDLKDLSTRLRTELLETAEIRRAVAAETAFDHSITNGPDSEAVFQKTAIQPRANLKFNFPKLKPYEALSHLSDLRGMVDLEKVPVVTGFSEVGPWGNSRTRWDMECYGEFSLEGCVEIAWIMGLIKNFNGKGKDGKPYSGWVDTKTGEPVDDKDVKAKYEKYILEHCGIRIIEAELFHGYNPEKKELLQEVVIDHDLEPFEASKEAAHEFKLRHGDQVEIFEIPDSTEWSVRFKRGTSMLIPKALRFDRFVAGQIPLGWDPKRYGIPDDIISQVDPTTLYVLVSTVEALVASGITDPYECYKYIHVSELGNTVGSGIGGMSALRGMYKDRWTDKPVQKDILQESFINTANAWINMLLLSASGPIKTPVGACATAVESVDAAVDLITSGKARICISGGYDDFSEEGSYEFANMGATSNAAKETERGRTPQEMSRPATSTRDGFMESQGAGVQIIMQAKLAIEMGVPIHGIVGYVSTAMDKQGRSVPAPGQGILTGAREIATKTPLPIVDLKFRSRQLQRRRSQIGEWAEREYLYLEEELDAMKVQNPDLDLEAYRIERINVIKEEVVRQEKEALNTFGNEFWKRDPTIAPIRGALAVWGLTIDDLGVASFHGTSTKANEKNECDVIDSQLTHLGRSKGNAVYGVFQKYLTGHSKGGAGAWMLNGALQILRSGFVPGNRNADNIDEYLARFDRVMFPSEGIQTDGIKAASVTAFGFGQVGGQVIVIHPDYIYGVIDEATYNAYKAKTAARYKASYRYTHDALVYNNLVRAKDSPPYTKEQEKAVYLNPLARASKSKAGTWTFPATLPAESDISKTNETTRTLQSLTTSLTNSNENVGVDVELVSAISIDNETFIERNFTDTERKYCFAAPNPQASFAGRWSAKEAVFKSLGISGKGAAAPLKDIEIISSESGAPEVVLHGEAAKAATTAGVKSVSVSISHDDNQSVSVALAHK.

The interval 101–141 is disordered; it reads PAEAPASTSSTPKVETAAAAAPAATPAPAPAQTSAPAAALP. The span at 116–139 shows a compositional bias: low complexity; that stretch reads TAAAAAPAATPAPAPAQTSAPAAA. Residues 145–220 form the Carrier domain; that stretch reads PKALEVLHTL…AIMQSSFNGS (76 aa). O-(pantetheine 4'-phosphoryl)serine is present on Ser-180. Residue Ser-604 is modified to Phosphoserine. Positions 1079–1616 constitute a Ketosynthase family 3 (KS3) domain; that stretch reads LQEVVIDHDL…QVGGQVIVIH (538 aa). The active-site For beta-ketoacyl synthase activity is Cys-1262. A disordered region spans residues 1304 to 1332; the sequence is GATSNAAKETERGRTPQEMSRPATSTRDG. Phosphoserine is present on Ser-1412. Active-site for beta-ketoacyl synthase activity residues include His-1501 and His-1542. The Mg(2+) site is built by Asp-1728, Val-1729, and Glu-1730. Acetyl-CoA is bound by residues 1728-1730, Tyr-1754, Ser-1764, 1773-1783, 1797-1800, and 1827-1829; these read DVE, EAVFKSLGISG, SSES, and ISH. Residues Ser-1828 and His-1829 each contribute to the Mg(2+) site.

Belongs to the thiolase-like superfamily. Fungal fatty acid synthetase subunit alpha family. In terms of assembly, [Alpha(6)beta(6)] hexamers of two multifunctional subunits (alpha and beta).

It catalyses the reaction acetyl-CoA + n malonyl-CoA + 2n NADPH + 4n H(+) = a long-chain-acyl-CoA + n CoA + n CO2 + 2n NADP(+).. The enzyme catalyses a fatty acyl-[ACP] + malonyl-[ACP] + H(+) = a 3-oxoacyl-[ACP] + holo-[ACP] + CO2. It carries out the reaction a (3R)-hydroxyacyl-[ACP] + NADP(+) = a 3-oxoacyl-[ACP] + NADPH + H(+). Functionally, fatty acid synthetase catalyzes the formation of long-chain fatty acids from acetyl-CoA, malonyl-CoA and NADPH. The alpha subunit contains domains for: acyl carrier protein, 3-oxoacyl-[acyl-carrier-protein] reductase, and 3-oxoacyl-[acyl-carrier-protein] synthase. This subunit coordinates the binding of the six beta subunits to the enzyme complex. This is Fatty acid synthase subunit alpha (fas2) from Schizosaccharomyces pombe (strain 972 / ATCC 24843) (Fission yeast).